The following is a 269-amino-acid chain: Eukaryotic translation initiation factor 3 subunit G-1 (269 aa).

The region spanning 188 to 266 (AAIRISNLSE…LILSVEWSKP (79 aa)) is the RRM domain.

The protein belongs to the eIF-3 subunit G family. Component of the eukaryotic translation initiation factor 3 (eIF-3) complex. The eIF-3 complex interacts with pix.

The protein resides in the cytoplasm. In terms of biological role, RNA-binding component of the eukaryotic translation initiation factor 3 (eIF-3) complex, which is involved in protein synthesis of a specialized repertoire of mRNAs and, together with other initiation factors, stimulates binding of mRNA and methionyl-tRNAi to the 40S ribosome. The eIF-3 complex specifically targets and initiates translation of a subset of mRNAs involved in cell proliferation. This subunit can bind 18S rRNA. The sequence is that of Eukaryotic translation initiation factor 3 subunit G-1 from Drosophila sechellia (Fruit fly).